The primary structure comprises 330 residues: Membrane progestin receptor gamma (330 aa).

Over 1 to 51 (MLSLKLPRLFSIDQIPQVFHEQGILFGYRHPQSSATACILSLFQMTNETLN) the chain is Cytoplasmic. The helical transmembrane segment at 52 to 72 (IWTHLLPFWFFAWRFVTALYM) threads the bilayer. At 73–80 (TDIKNDSY) the chain is on the extracellular side. Residues 81–101 (SWPMLVYMCTSCVYPLVSSCA) traverse the membrane as a helical segment. At 102-113 (HTFSSMSKNARH) the chain is on the cytoplasmic side. A helical membrane pass occupies residues 114–134 (ICYFLDYGAVNLFSLGSAIAY). Topologically, residues 135-141 (SAYTFPD) are extracellular. Residues 142–162 (ALMCTTFHDYYVALAVLNTIL) traverse the membrane as a helical segment. Residues 163–186 (STGLSCYSRFLEIQKPRLCKVIRV) lie on the Cytoplasmic side of the membrane. Residues 187–207 (LAFAYPYTWDSLPIFYRLFLF) form a helical membrane-spanning segment. At 208–253 (PGESAQNEATSYHQKHMIMTLLASFLYSAHLPERLAPGRFDYIGHS) the chain is on the extracellular side. Residues 254–274 (HQLFHVCVILATHMQMEAILL) traverse the membrane as a helical segment. Residues 275 to 294 (DKTLRKEWLLATSKPFSFSQ) lie on the Cytoplasmic side of the membrane. A helical membrane pass occupies residues 295–315 (IAGAILLCIIFSLSNIIYFSA). Over 316–330 (ALYRIPKPELHKKET) the chain is Extracellular.

Belongs to the ADIPOR family. In terms of tissue distribution, expressed in the brain, lung, kidney, colon, adrenal and lung.

It is found in the cell membrane. Plasma membrane progesterone (P4) receptor coupled to G proteins. Seems to act through a G(i) mediated pathway. May be involved in oocyte maturation. The protein is Membrane progestin receptor gamma of Homo sapiens (Human).